The chain runs to 299 residues: GTPase Era (299 aa).

The 168-residue stretch at 5–172 folds into the Era-type G domain; the sequence is RSGFISIIGR…KDLIFAKLPE (168 aa). Residues 13–20 are G1; sequence GRPNVGKS. GTP is bound at residue 13-20; the sequence is GRPNVGKS. The interval 39–43 is G2; sequence QTTRN. The segment at 60–63 is G3; sequence DTPG. Residues 60–64 and 122–125 contribute to the GTP site; these read DTPGI and NKMD. Residues 122–125 are G4; it reads NKMD. Residues 151–153 form a G5 region; sequence VSA. One can recognise a KH type-2 domain in the interval 203-280; it reads TREEIPHSVA…YLELWVKVKK (78 aa).

Belongs to the TRAFAC class TrmE-Era-EngA-EngB-Septin-like GTPase superfamily. Era GTPase family. In terms of assembly, monomer.

The protein localises to the cytoplasm. Its subcellular location is the cell membrane. Functionally, an essential GTPase that binds both GDP and GTP, with rapid nucleotide exchange. Plays a role in 16S rRNA processing and 30S ribosomal subunit biogenesis and possibly also in cell cycle regulation and energy metabolism. This Heliobacterium modesticaldum (strain ATCC 51547 / Ice1) protein is GTPase Era.